The chain runs to 488 residues: 3-octaprenyl-4-hydroxybenzoate carboxy-lyase (488 aa).

Residue Asn172 coordinates Mn(2+). Residues 175–177 (IYR), 189–191 (RWL), and 194–195 (RG) each bind prenylated FMN. Glu238 is a Mn(2+) binding site. Asp287 functions as the Proton donor in the catalytic mechanism.

The protein belongs to the UbiD family. In terms of assembly, homohexamer. It depends on prenylated FMN as a cofactor. Mn(2+) serves as cofactor.

Its subcellular location is the cell membrane. It catalyses the reaction a 4-hydroxy-3-(all-trans-polyprenyl)benzoate + H(+) = a 2-(all-trans-polyprenyl)phenol + CO2. It participates in cofactor biosynthesis; ubiquinone biosynthesis. In terms of biological role, catalyzes the decarboxylation of 3-octaprenyl-4-hydroxy benzoate to 2-octaprenylphenol, an intermediate step in ubiquinone biosynthesis. This Hahella chejuensis (strain KCTC 2396) protein is 3-octaprenyl-4-hydroxybenzoate carboxy-lyase.